Reading from the N-terminus, the 1079-residue chain is Integrator complex subunit 3 homolog (1079 aa).

Disordered stretches follow at residues 544–574 (ETEA…DDLP), 925–949 (YPSS…TPSA), and 1010–1079 (AVGR…NDSD). A compositionally biased stretch (low complexity) spans 938 to 949 (KGSSAASSTPSA). 4 positions are modified to phosphoserine: Ser-1049, Ser-1050, Ser-1054, and Ser-1055. Positions 1062 to 1073 (HKITQAAKKRKK) are enriched in basic residues.

Belongs to the Integrator subunit 3 family. Belongs to the multiprotein complex Integrator, at least composed of IntS1, IntS2, IntS3, IntS4, omd/IntS5, IntS6, defl/IntS7, IntS8, IntS9, IntS10, IntS11, IntS12, asun/IntS13, IntS14 and IntS15. The core complex associates with protein phosphatase 2A subunits mts/PP2A and Pp2A-29B, to form the Integrator-PP2A (INTAC) complex.

The protein localises to the nucleus. It is found in the cytoplasm. Its function is as follows. Component of the integrator complex, a multiprotein complex that terminates RNA polymerase II (Pol II) transcription in the promoter-proximal region of genes. The integrator complex provides a quality checkpoint during transcription elongation by driving premature transcription termination of transcripts that are unfavorably configured for transcriptional elongation: the complex terminates transcription by (1) catalyzing dephosphorylation of the C-terminal domain (CTD) of Pol II subunit Polr2A/Rbp1 and Spt5, and (2) degrading the exiting nascent RNA transcript via endonuclease activity. The integrator complex is also involved in the 3'-end processing of the U7 snRNA, and also the spliceosomal snRNAs U1, U2, U4 and U5. The protein is Integrator complex subunit 3 homolog (IntS3) of Drosophila mojavensis (Fruit fly).